A 366-amino-acid polypeptide reads, in one-letter code: MKLSIILGTRPEIIKLSPIIRALEKTNIDWHIIHTNQHYSENMDKIFFEELNLPNPKYNLNIGSGTHGEQTGKMLIEIEKVLLKEKPDVVVVQGDTNTVLAGALVASKLKIDVAHVEAGLRSFDRNMPEEINRVLTDHISSYLFAPTEIAKNNLLREGIEENKIFVVGNTIVDATLQNLKIAEKNENVRAFFNSVVIDDDYFLLTLHRAENVDNKERLKNIVEGIFEIIEIYDKAIIFSIHPRTKKRLKEFNLFDKLKSNKKIKIIEPVGYLEFLMLEKNAELILTDSGGVQEEACILKVPCITLRDNTERPETVEVGANILVGDNKEKLIKAVEIMLNKKRNWKNPFGNGKSGERIVRILTYGKY.

The active site involves H207.

The protein belongs to the UDP-N-acetylglucosamine 2-epimerase family. Homodimer.

The protein localises to the cytoplasm. It catalyses the reaction UDP-N-acetyl-alpha-D-glucosamine = UDP-N-acetyl-alpha-D-mannosamine. Its function is as follows. Catalyzes the reversible epimerization at C-2 of UDP-N-acetylglucosamine (UDP-GlcNAc) to produce UDP-N-acetylmannosamine (UDP-ManNAc), the activated donor of ManNAc residues. The protein is UDP-N-acetylglucosamine 2-epimerase (wecB) of Methanocaldococcus jannaschii (strain ATCC 43067 / DSM 2661 / JAL-1 / JCM 10045 / NBRC 100440) (Methanococcus jannaschii).